The sequence spans 679 residues: Palmitoyltransferase ERF2 (679 aa).

Disordered stretches follow at residues 1–181, 194–250, and 267–338; these read MASK…SQMR, RQMS…MSSD, and LSNL…SQKS. The Cytoplasmic segment spans residues 1–368; that stretch reads MASKPDDDGF…WQNTRGRPIN (368 aa). Composition is skewed to polar residues over residues 44–57 and 66–82; these read VQNN…STDM and TGAS…SLRN. Low complexity-rich tracts occupy residues 103-114 and 143-167; these read STSQPPSLSSRS and PSTM…PTSP. Over residues 291 to 301 the composition is skewed to polar residues; that stretch reads NDGQLSQNRST. The helical transmembrane segment at 369–389 threads the bilayer; it reads IATGIFVVVPCALFFGFEAPW. Residues 390–393 are Lumenal-facing; it reads LWNN. Residues 394 to 414 form a helical membrane-spanning segment; the sequence is VSPAIPIVFAYLAYICFSSFI. The Cytoplasmic portion of the chain corresponds to 415-511; sequence HASVTDPGIL…NNCVGKRNYR (97 aa). Residues 468-518 form the DHHC domain; it reads KHCRTCNIWRPPRAHHCRLCDNCIETHDHHCVWLNNCVGKRNYRYFFTFVT. The active-site S-palmitoyl cysteine intermediate is C498. Residues 512–532 form a helical membrane-spanning segment; the sequence is YFFTFVTSATVLAAYLIATSL. The Lumenal portion of the chain corresponds to 533 to 554; it reads TQILLYRNRQGISFGQAVDHFR. The chain crosses the membrane as a helical span at residues 555 to 575; that stretch reads VPFALVFLGFITFLYPAALMG. Residues 576–679 lie on the Cytoplasmic side of the membrane; it reads YHIFLMARGE…PVSLRNDTPH (104 aa). Residues 640–679 are disordered; sequence LGIRRDKRPRSSSQGLEMHDVNPGSSGFQGPVSLRNDTPH.

This sequence belongs to the DHHC palmitoyltransferase family. ERF2/ZDHHC9 subfamily. Autopalmitoylated.

It is found in the endoplasmic reticulum membrane. The catalysed reaction is L-cysteinyl-[protein] + hexadecanoyl-CoA = S-hexadecanoyl-L-cysteinyl-[protein] + CoA. Its function is as follows. Palmitoyltransferase specific for Ras proteins. The polypeptide is Palmitoyltransferase ERF2 (ERF2) (Gibberella zeae (strain ATCC MYA-4620 / CBS 123657 / FGSC 9075 / NRRL 31084 / PH-1) (Wheat head blight fungus)).